We begin with the raw amino-acid sequence, 852 residues long: Lon protease homolog 2, peroxisomal (852 aa).

Position 2 is an N-acetylserine (Ser-2). The region spanning 13–222 is the Lon N-terminal domain; it reads LPLLLTHESV…MTIPLLVRQI (210 aa). Position 375-382 (375-382) interacts with ATP; it reads GPPGVGKT. Residues 651–837 form the Lon proteolytic domain; the sequence is LSQPGVAIGL…DEVLNAAFDG (187 aa). Residues Ser-743 and Lys-786 contribute to the active site. Residues 850–852 carry the Microbody targeting signal motif; that stretch reads SKL.

This sequence belongs to the peptidase S16 family. Interacts with PEX5. Interacts with TYSND1. May interact with enzymes involved in beta-oxidation of fatty acids, including ACOX1/AOX.

The protein localises to the peroxisome matrix. The enzyme catalyses Hydrolysis of proteins in presence of ATP.. Functionally, ATP-dependent serine protease that mediates the selective degradation of misfolded and unassembled polypeptides in the peroxisomal matrix. Necessary for type 2 peroxisome targeting signal (PTS2)-containing protein processing and facilitates peroxisome matrix protein import. May indirectly regulate peroxisomal fatty acid beta-oxidation through degradation of the self-processed forms of TYSND1. This is Lon protease homolog 2, peroxisomal (Lonp2) from Rattus norvegicus (Rat).